The following is an 859-amino-acid chain: MRDTSSGRMRTGVTGLALAVMVACVMFRAESGIARTYSFDAAMLKGGGKGVDLTLFEEGGQLPGIYPVDIILNGSRVDSQEMAFHAERDAEGRPYLKTCLTREMLARYGVRIEEYPALFRASGEGRGASVAEEACADLTAIPQATESYQFAAQQLVLGIPQVAPSAAEGDWPEALWDDGIPAFLLNWQANAGRSEYRGYGKRVTDSYWVSLQPGINIGPWRVRNLTTWNRSSGQSGKWESSYIRAERGLNGIKSRLTLGEDYTPSDIFDSVPFRGAMMSSDESMVPYNLREFAPVVRGIARTQARIEVRQNGYLIQSQTVAPGAFALTDLPVTGSGSDLQVTVLESDGTAQVFTVPFTTPAIALREGYLKYNVTAGQYRSSDDAVEHTSLGQVTAMYGLPWGLTVYGGLQGADDYQSAALGLGWSLGRLGAVSLDTTHSRGQQKGHDYETGDTWRIRYNKSFELTGTSFTAASYQYSSDGYHTLPDVLDTWRDDRYAYRHTENRSRRTTLSLSQSLGQWGYVGLNGSRDEYRDRPHRDYFGASYSTSWNNISLSVNWSRNRNSGGYYGGWSRTEDSVSMWMSVPLGRWFGGADNDISTTAQMQRSTGQDTRYEAGLNGRAFDRRLYWDVREQMVPGSESHADTSRLNLTWYGTYGELTGMYSYSSTMRQLNAGMSGSMVAHSEGVTFGQRTGDTVALIAAPGVSGASVGGWPGVRTDFRGYTLAGYASPYQENVLTLDPTTFPEDAEVPQTDSRVVPTKGAVVRAGFRTRVGGRALVSLARQDGTPLPFGAVVTVEGERGQAAGSAGVVGDRGEVYLSGLKESGKLKAQWGENSLCHADYRLPEEKGPAGIFLTRTVCM.

A signal peptide spans 1 to 28 (MRDTSSGRMRTGVTGLALAVMVACVMFR).

Belongs to the fimbrial export usher family.

Its subcellular location is the cell outer membrane. In terms of biological role, involved in the export and assembly of AFA-III afimbrial adhesin subunits across the outer membrane. In Escherichia coli, this protein is Outer membrane usher protein AfaC (afaC).